The following is a 221-amino-acid chain: uncharacterized protein (221 aa).

The tract at residues 1–30 (MVPPNPAHQPARRTQPQLQPQSQPRAQPLP) is disordered. Over residues 12–25 (RRTQPQLQPQSQPR) the composition is skewed to polar residues. A helical membrane pass occupies residues 37–57 (VLCIIVALVLLGLLVGLAILI).

Its subcellular location is the membrane. This is an uncharacterized protein from Arabidopsis thaliana (Mouse-ear cress).